We begin with the raw amino-acid sequence, 292 residues long: Homoserine kinase (292 aa).

84–94 contributes to the ATP binding site; it reads PLARGMGSSSA.

The protein belongs to the GHMP kinase family. Homoserine kinase subfamily.

The protein localises to the cytoplasm. It catalyses the reaction L-homoserine + ATP = O-phospho-L-homoserine + ADP + H(+). It participates in amino-acid biosynthesis; L-threonine biosynthesis; L-threonine from L-aspartate: step 4/5. Functionally, catalyzes the ATP-dependent phosphorylation of L-homoserine to L-homoserine phosphate. This chain is Homoserine kinase, found in Thermus thermophilus (strain ATCC 27634 / DSM 579 / HB8).